The chain runs to 191 residues: Probable GTP-binding protein EngB (191 aa).

Positions 22–191 constitute an EngB-type G domain; it reads DFDHFLILGR…KLINEEFSNE (170 aa). GTP-binding positions include 30-37, 57-61, 75-78, 142-145, and 172-174; these read GRSNVGKS, GKTIT, DAPG, TKYD, and TSS. Positions 37 and 59 each coordinate Mg(2+).

Belongs to the TRAFAC class TrmE-Era-EngA-EngB-Septin-like GTPase superfamily. EngB GTPase family. It depends on Mg(2+) as a cofactor.

Necessary for normal cell division and for the maintenance of normal septation. The protein is Probable GTP-binding protein EngB of Acholeplasma laidlawii (strain PG-8A).